The sequence spans 201 residues: Translation initiation factor IF-3 (201 aa).

The disordered stretch occupies residues 167-201 (PHRGAKTRARARHPGEPAGGPPPKPTAGDSKAAPN). Over residues 169-178 (RGAKTRARAR) the composition is skewed to basic residues.

This sequence belongs to the IF-3 family. In terms of assembly, monomer.

It is found in the cytoplasm. Functionally, IF-3 binds to the 30S ribosomal subunit and shifts the equilibrium between 70S ribosomes and their 50S and 30S subunits in favor of the free subunits, thus enhancing the availability of 30S subunits on which protein synthesis initiation begins. The protein is Translation initiation factor IF-3 of Mycobacterium bovis (strain ATCC BAA-935 / AF2122/97).